Here is a 410-residue protein sequence, read N- to C-terminus: LL-diaminopimelate aminotransferase (410 aa).

The substrate site is built by Tyr15 and Gly42. Pyridoxal 5'-phosphate-binding positions include Tyr72, 108–109, Tyr132, Asn186, Tyr217, and 245–247; these read TK and SFS. Residues Lys109, Tyr132, and Asn186 each coordinate substrate. Lys248 is modified (N6-(pyridoxal phosphate)lysine). 2 residues coordinate pyridoxal 5'-phosphate: Arg256 and Asn291. Positions 291 and 387 each coordinate substrate.

It belongs to the class-I pyridoxal-phosphate-dependent aminotransferase family. LL-diaminopimelate aminotransferase subfamily. As to quaternary structure, homodimer. The cofactor is pyridoxal 5'-phosphate.

It carries out the reaction (2S,6S)-2,6-diaminopimelate + 2-oxoglutarate = (S)-2,3,4,5-tetrahydrodipicolinate + L-glutamate + H2O + H(+). Its pathway is amino-acid biosynthesis; L-lysine biosynthesis via DAP pathway; LL-2,6-diaminopimelate from (S)-tetrahydrodipicolinate (aminotransferase route): step 1/1. In terms of biological role, involved in the synthesis of meso-diaminopimelate (m-DAP or DL-DAP), required for both lysine and peptidoglycan biosynthesis. Catalyzes the direct conversion of tetrahydrodipicolinate to LL-diaminopimelate. The chain is LL-diaminopimelate aminotransferase from Lawsonia intracellularis (strain PHE/MN1-00).